The sequence spans 375 residues: Trichodiene synthase (375 aa).

It belongs to the trichodiene synthase family.

It catalyses the reaction (2E,6E)-farnesyl diphosphate = trichodiene + diphosphate. It functions in the pathway sesquiterpene biosynthesis; trichothecene biosynthesis. Its function is as follows. TS is a member of the terpene cyclase group of enzymes. It catalyzes the isomerization and cyclization of farnesyl pyro-phosphate to form trichodiene, the first cyclic intermediate in the biosynthetic pathway for trichothecenes. It serves to branch trichothecene biosynthesis from the isoprenoid pathway. The polypeptide is Trichodiene synthase (TRI5) (Fusarium acaciae-mearnsii).